Reading from the N-terminus, the 530-residue chain is 2,3-bisphosphoglycerate-independent phosphoglycerate mutase (530 aa).

Mn(2+) contacts are provided by aspartate 15 and serine 65. Serine 65 functions as the Phosphoserine intermediate in the catalytic mechanism. Residues histidine 126, arginine 155–aspartate 156, arginine 187, arginine 193, arginine 257–arginine 260, and lysine 330 each bind substrate. Mn(2+)-binding residues include aspartate 397, histidine 401, aspartate 438, histidine 439, and histidine 456.

This sequence belongs to the BPG-independent phosphoglycerate mutase family. In terms of assembly, monomer. The cofactor is Mn(2+).

The catalysed reaction is (2R)-2-phosphoglycerate = (2R)-3-phosphoglycerate. It functions in the pathway carbohydrate degradation; glycolysis; pyruvate from D-glyceraldehyde 3-phosphate: step 3/5. Its function is as follows. Catalyzes the interconversion of 2-phosphoglycerate and 3-phosphoglycerate. In Synechococcus sp. (strain JA-2-3B'a(2-13)) (Cyanobacteria bacterium Yellowstone B-Prime), this protein is 2,3-bisphosphoglycerate-independent phosphoglycerate mutase.